Here is a 995-residue protein sequence, read N- to C-terminus: tRNA wybutosine-synthesizing protein 2/3/4 (995 aa).

Residues 1–212 form a tRNA wybutosine-synthesizing protein 3 homolog region; the sequence is MDFEKRKAAT…GFSVALASNG (212 aa). Kelch repeat units lie at residues 284–335, 336–386, 387–436, 437–486, and 488–535; these read EVIV…MVGD, FMFV…SVGT, KVYI…AYGS, QSFM…VYKH, and IGII…SILG. The tract at residues 661–995 is tRNA wybutosine-synthesizing protein 2 homolog; the sequence is ERSEENNLTK…RHLVADVRCR (335 aa). Residues K828 and 896–897 contribute to the S-adenosyl-L-methionine site; that span reads DN.

This sequence in the C-terminal section; belongs to the class I-like SAM-binding methyltransferase superfamily. TRM5/TYW2 family. It in the N-terminal section; belongs to the TYW3 family.

The catalysed reaction is 4-demethyl-7-[(3S)-3-amino-3-carboxypropyl]wyosine(37) in tRNA(Phe) + S-adenosyl-L-methionine = 7-[(3S)-3-amino-3-carboxypropyl]wyosine(37) in tRNA(Phe) + S-adenosyl-L-homocysteine + H(+). The enzyme catalyses 4-demethylwyosine(37) in tRNA(Phe) + S-adenosyl-L-methionine = 4-demethyl-7-[(3S)-3-amino-3-carboxypropyl]wyosine(37) in tRNA(Phe) + S-methyl-5'-thioadenosine + H(+). It participates in tRNA modification; wybutosine-tRNA(Phe) biosynthesis. Functionally, S-adenosyl-L-methionine-dependent transferase that acts as a component of the wybutosine biosynthesis pathway. Wybutosine is a hyper modified guanosine with a tricyclic base found at the 3'-position adjacent to the anticodon of eukaryotic phenylalanine tRNA. The chain is tRNA wybutosine-synthesizing protein 2/3/4 from Arabidopsis thaliana (Mouse-ear cress).